Here is a 633-residue protein sequence, read N- to C-terminus: Rab11 family-interacting protein 4 (633 aa).

2 consecutive EF-hand domains span residues 17–52 (LFLQRLRQVFDACDGDADGFIKVEHFVALGLQFAQG) and 50–85 (AQGDEVKKLAKRLDPNAQGRIGFKDFCHGVLAMKGC). 7 residues coordinate Ca(2+): Asp-30, Asp-32, Asp-34, Asp-63, Asn-65, Arg-69, and Asp-74. Disordered stretches follow at residues 152–182 (SDLDSAMYSTPSSEASDEGRNEDKAGGLGSL) and 218–257 (GEGEDIDYSPGSPCPDDESRTNALSDLGSSVPSSAGQTPR). A compositionally biased stretch (polar residues) spans 238 to 254 (TNALSDLGSSVPSSAGQ). Positions 410–613 (AREKGTEIVL…EEINYRLRQY (204 aa)) form a coiled coil. The region spanning 570–632 (EAKSLFSTQT…DHNPSILEIK (63 aa)) is the FIP-RBD domain.

Homodimer. Forms a complex with Rab11 (rab11a or rab11b) and arf6.

It is found in the recycling endosome membrane. It localises to the cleavage furrow. The protein resides in the midbody. The protein localises to the cytoplasmic vesicle. In terms of biological role, acts as a regulator of endocytic traffic by participating in membrane delivery. Required for the abscission step in cytokinesis, possibly by acting as an 'address tag' delivering recycling endosome membranes to the cleavage furrow during late cytokinesis. This Xenopus tropicalis (Western clawed frog) protein is Rab11 family-interacting protein 4 (rab11fip4).